The primary structure comprises 676 residues: MSSAYELVSNYQPAGDQPQAIKTLNEGLENGLAHQTLLGVTGSGKTFTLANVIAHSGRPTIIMAHNKTLAAQLYGEMKAFFPNNAVEYFVSYFDYYQPEAYVPTTDTFIEKDSSVNEHIEQMRLSATKALLERKDAIIIASVSAIYGLGDPKAYLSMILHLRRGDIINQRDMLRRLAELQYKRNDMAFERGTFRVRGEVLDIFPAESEHEAIRIEMFDDEVERISKFDPLTGSIITKDMPRCTIYPKTHYVTPREQVLDAIEKIKVDLAIRQKELLENNKLVEEQRITQRTQFDIEMMNELGFCSGIENYSRYLSGRPEGEAPPTLFDYLPQDGLLIIDESHITVSQIGAMYKGDRSRKENLVEYGFRLPSALDNRPLRFEEFEALAPQTIYVSATPGKYEIEKSDGEIAEQVVRPTGLLDPVIEVRPVATQVDDLLSEIRIRTKNNERVLVTTLTKRMAEDLTEYLDEHGVKVRYLHSDIDTVERVEIIRDLRLGEFDVLVGINLLREGLDMPEVSLVAILDADKEGFLRSERSLIQTIGRAARNLEGKAILYADKITGSMEKAIGETERRREKQQLHNETLGIVPQALKKDVADILELGDMTKNKRKVVAPKIKLSEVAEEGASYSAMSPQQLEKAIQKLESKMYQHAKDLEFEQAAQVRDEIDNLRKQFIVNS.

In terms of domain architecture, Helicase ATP-binding spans 26–414 (EGLENGLAHQ…SDGEIAEQVV (389 aa)). 39 to 46 (GVTGSGKT) contacts ATP. Residues 92-115 (YFDYYQPEAYVPTTDTFIEKDSSV) carry the Beta-hairpin motif. The 167-residue stretch at 432–598 (QVDDLLSEIR…ALKKDVADIL (167 aa)) folds into the Helicase C-terminal domain. The UVR domain occupies 636 to 671 (EKAIQKLESKMYQHAKDLEFEQAAQVRDEIDNLRKQ).

Belongs to the UvrB family. Forms a heterotetramer with UvrA during the search for lesions. Interacts with UvrC in an incision complex.

Its subcellular location is the cytoplasm. In terms of biological role, the UvrABC repair system catalyzes the recognition and processing of DNA lesions. A damage recognition complex composed of 2 UvrA and 2 UvrB subunits scans DNA for abnormalities. Upon binding of the UvrA(2)B(2) complex to a putative damaged site, the DNA wraps around one UvrB monomer. DNA wrap is dependent on ATP binding by UvrB and probably causes local melting of the DNA helix, facilitating insertion of UvrB beta-hairpin between the DNA strands. Then UvrB probes one DNA strand for the presence of a lesion. If a lesion is found the UvrA subunits dissociate and the UvrB-DNA preincision complex is formed. This complex is subsequently bound by UvrC and the second UvrB is released. If no lesion is found, the DNA wraps around the other UvrB subunit that will check the other stand for damage. This is UvrABC system protein B from Aliivibrio fischeri (strain ATCC 700601 / ES114) (Vibrio fischeri).